The following is a 132-amino-acid chain: Small ribosomal subunit protein uS8 (132 aa).

It belongs to the universal ribosomal protein uS8 family. In terms of assembly, part of the 30S ribosomal subunit. Contacts proteins S5 and S12.

Its function is as follows. One of the primary rRNA binding proteins, it binds directly to 16S rRNA central domain where it helps coordinate assembly of the platform of the 30S subunit. The protein is Small ribosomal subunit protein uS8 of Ehrlichia canis (strain Jake).